Reading from the N-terminus, the 199-residue chain is Ribonuclease HII (199 aa).

The region spanning 9-198 is the RNase H type-2 domain; it reads QFVAGVDEVG…VRAAIEQMNL (190 aa). The a divalent metal cation site is built by Asp-15, Glu-16, and Asp-107.

This sequence belongs to the RNase HII family. Mn(2+) serves as cofactor. Mg(2+) is required as a cofactor.

The protein resides in the cytoplasm. The enzyme catalyses Endonucleolytic cleavage to 5'-phosphomonoester.. Endonuclease that specifically degrades the RNA of RNA-DNA hybrids. In Saccharophagus degradans (strain 2-40 / ATCC 43961 / DSM 17024), this protein is Ribonuclease HII.